A 90-amino-acid polypeptide reads, in one-letter code: U7-theraphotoxin-Hhn1a 1 (90 aa).

Residues 1–19 (MKTAIFTVVLALAVFAVLS) form the signal peptide. The propeptide occupies 20–50 (FGWEANEKALSEEFTELIHEKEAASETEARE). 3 disulfide bridges follow: C51–C65, C58–C70, and C64–C81.

It belongs to the neurotoxin 10 (Hwtx-1) family. 13 (Hntx-13) subfamily. As to expression, expressed by the venom gland.

Its subcellular location is the secreted. Its function is as follows. Ion channel inhibitor. This chain is U7-theraphotoxin-Hhn1a 1, found in Cyriopagopus hainanus (Chinese bird spider).